The sequence spans 155 residues: MRVGYGYDVHRLVDGRPLVLGGVTIPFDKGLKGHSDADVLLHAVCDALLGAAGLGDIGMHFPDKDPKYKNIASTRLLEETGRKIAQEGYKIVNLDATLVAEAPKIGPYRQEMVSVIAKCLGLENRQVNVKATTTEGLGITGRGEGMAATCVACLE.

Positions 8 and 10 each coordinate a divalent metal cation. Residues Asp-8–His-10 and His-34–Ser-35 contribute to the 4-CDP-2-C-methyl-D-erythritol 2-phosphate site. His-42 contacts a divalent metal cation. Residues Asp-56–Gly-58, Phe-61–Asp-65, Thr-132–Glu-135, and Arg-142 contribute to the 4-CDP-2-C-methyl-D-erythritol 2-phosphate site.

The protein belongs to the IspF family. As to quaternary structure, homotrimer. A divalent metal cation is required as a cofactor.

The catalysed reaction is 4-CDP-2-C-methyl-D-erythritol 2-phosphate = 2-C-methyl-D-erythritol 2,4-cyclic diphosphate + CMP. The protein operates within isoprenoid biosynthesis; isopentenyl diphosphate biosynthesis via DXP pathway; isopentenyl diphosphate from 1-deoxy-D-xylulose 5-phosphate: step 4/6. In terms of biological role, involved in the biosynthesis of isopentenyl diphosphate (IPP) and dimethylallyl diphosphate (DMAPP), two major building blocks of isoprenoid compounds. Catalyzes the conversion of 4-diphosphocytidyl-2-C-methyl-D-erythritol 2-phosphate (CDP-ME2P) to 2-C-methyl-D-erythritol 2,4-cyclodiphosphate (ME-CPP) with a corresponding release of cytidine 5-monophosphate (CMP). This is 2-C-methyl-D-erythritol 2,4-cyclodiphosphate synthase from Desulfatibacillum aliphaticivorans.